The following is an 81-amino-acid chain: uncharacterized protein (81 aa).

2 helical membrane passes run 4-24 and 61-81; these read IFKM…FNYT and NIYT…LHII.

Its subcellular location is the cell membrane. This is an uncharacterized protein from Bacillus subtilis (strain 168).